Here is a 172-residue protein sequence, read N- to C-terminus: Adenine phosphoribosyltransferase (172 aa).

Belongs to the purine/pyrimidine phosphoribosyltransferase family. Homodimer.

Its subcellular location is the cytoplasm. It catalyses the reaction AMP + diphosphate = 5-phospho-alpha-D-ribose 1-diphosphate + adenine. The protein operates within purine metabolism; AMP biosynthesis via salvage pathway; AMP from adenine: step 1/1. Catalyzes a salvage reaction resulting in the formation of AMP, that is energically less costly than de novo synthesis. The chain is Adenine phosphoribosyltransferase from Hydrogenovibrio crunogenus (strain DSM 25203 / XCL-2) (Thiomicrospira crunogena).